The sequence spans 144 residues: Protein cornichon (144 aa).

Topologically, residues 1 to 10 are lumenal; that stretch reads MAFNFTAFTY. Positions 1 to 57 are interaction with grk; it reads MAFNFTAFTYIVALIGDAFLIFFAIFHVIAFDELKTDYKNPIDQCNSLNPLVLPEYL. Residues 11–31 traverse the membrane as a helical segment; the sequence is IVALIGDAFLIFFAIFHVIAF. At 32-56 the chain is on the cytoplasmic side; it reads DELKTDYKNPIDQCNSLNPLVLPEY. Residues 57–77 traverse the membrane as a helical segment; sequence LLHLFLNLLFLFCGEWYSLCL. The Lumenal portion of the chain corresponds to 78 to 122; it reads NIPLIAYHIWRYKNRPLMSGPGLYDPTTVLKTDTLSRNLREGWIK. A helical membrane pass occupies residues 123–143; it reads LAVYLISFFYYIYGMVYSLIS. Position 144 (threonine 144) is a topological domain, cytoplasmic.

This sequence belongs to the cornichon family. In terms of assembly, interacts with grk.

It localises to the endoplasmic reticulum membrane. Functionally, acts as a cargo receptor necessary for the transportation of gurken (grk) to a transitional endoplasmic reticulum (tER) site and promotes its incorporation into coat protein complex II (COPII) vesicles. Associated with gurken, produces a signal received by torpedo resulting in a signaling pathway that first establishes posterior follicle cell fates and normal localization of the anterior and posterior determinants, later they act in a signaling event inducing dorsal follicle cell fates and regulating the dorsal-ventral pattern of egg and embryo. This is Protein cornichon (cni) from Drosophila virilis (Fruit fly).